A 691-amino-acid chain; its full sequence is DNA ligase (691 aa).

Residues aspartate 41–aspartate 45, serine 91–leucine 92, and glutamate 121 contribute to the NAD(+) site. Residue lysine 123 is the N6-AMP-lysine intermediate of the active site. NAD(+) contacts are provided by arginine 144, glutamate 184, lysine 300, and lysine 324. Cysteine 418, cysteine 421, cysteine 437, and cysteine 443 together coordinate Zn(2+). The BRCT domain maps to serine 607 to threonine 691.

The protein belongs to the NAD-dependent DNA ligase family. LigA subfamily. It depends on Mg(2+) as a cofactor. Mn(2+) serves as cofactor.

The catalysed reaction is NAD(+) + (deoxyribonucleotide)n-3'-hydroxyl + 5'-phospho-(deoxyribonucleotide)m = (deoxyribonucleotide)n+m + AMP + beta-nicotinamide D-nucleotide.. Functionally, DNA ligase that catalyzes the formation of phosphodiester linkages between 5'-phosphoryl and 3'-hydroxyl groups in double-stranded DNA using NAD as a coenzyme and as the energy source for the reaction. It is essential for DNA replication and repair of damaged DNA. In Mycobacterium tuberculosis (strain ATCC 25177 / H37Ra), this protein is DNA ligase.